A 451-amino-acid polypeptide reads, in one-letter code: Chromosomal replication initiator protein DnaA (451 aa).

A domain I, interacts with DnaA modulators region spans residues 1-72 (MQSIEDIWQE…ANILQEITGR (72 aa)). Residues 72–108 (RLFDVRFIDGEQEENFEYTVIKPNPALDEDGIEIGKH) form a domain II region. The segment at 109-325 (MLNPRYVFDT…GALIRVVAYS (217 aa)) is domain III, AAA+ region. ATP is bound by residues Gly153, Gly155, Lys156, and Thr157. A domain IV, binds dsDNA region spans residues 326-451 (SLVNKDITAG…KNLRKAQNMF (126 aa)).

This sequence belongs to the DnaA family. As to quaternary structure, oligomerizes as a right-handed, spiral filament on DNA at oriC.

Its subcellular location is the cytoplasm. Plays an essential role in the initiation and regulation of chromosomal replication. ATP-DnaA binds to the origin of replication (oriC) to initiate formation of the DNA replication initiation complex once per cell cycle. Binds the DnaA box (a 9 base pair repeat at the origin) and separates the double-stranded (ds)DNA. Forms a right-handed helical filament on oriC DNA; dsDNA binds to the exterior of the filament while single-stranded (ss)DNA is stabiized in the filament's interior. The ATP-DnaA-oriC complex binds and stabilizes one strand of the AT-rich DNA unwinding element (DUE), permitting loading of DNA polymerase. After initiation quickly degrades to an ADP-DnaA complex that is not apt for DNA replication. Binds acidic phospholipids. This is Chromosomal replication initiator protein DnaA from Listeria monocytogenes serotype 4b (strain F2365).